The following is a 297-amino-acid chain: Alpha-tubulin N-acetyltransferase 1 (297 aa).

Residues 1 to 186 (MEFDFDVHKI…NNFVVFDGFF (186 aa)) form the N-acetyltransferase domain. Residues 120 to 133 (FYIH…GFGK) and 156 to 165 (SEKFLSFLRK) each bind acetyl-CoA. The disordered stretch occupies residues 269-297 (LHRTANSEQEDHSQRRRTSSLNRPQSIHH). The span at 287-297 (SSLNRPQSIHH) shows a compositional bias: polar residues.

Belongs to the acetyltransferase ATAT1 family.

The protein localises to the cytoplasm. It localises to the membrane. The protein resides in the clathrin-coated pit. Its subcellular location is the cell junction. It is found in the focal adhesion. The protein localises to the cell projection. It localises to the axon. The protein resides in the cytoskeleton. Its subcellular location is the spindle. The enzyme catalyses L-lysyl-[alpha-tubulin] + acetyl-CoA = N(6)-acetyl-L-lysyl-[alpha-tubulin] + CoA + H(+). Specifically acetylates 'Lys-40' in alpha-tubulin on the lumenal side of microtubules. Promotes microtubule destabilization and accelerates microtubule dynamics; this activity may be independent of acetylation activity. Acetylates alpha-tubulin with a slow enzymatic rate, due to a catalytic site that is not optimized for acetyl transfer. Enters the microtubule through each end and diffuses quickly throughout the lumen of microtubules. Acetylates only long/old microtubules because of its slow acetylation rate since it does not have time to act on dynamically unstable microtubules before the enzyme is released. May be involved in neuron development. The chain is Alpha-tubulin N-acetyltransferase 1 from Xenopus tropicalis (Western clawed frog).